Consider the following 364-residue polypeptide: UDP-3-O-acylglucosamine N-acyltransferase (364 aa).

His-257 serves as the catalytic Proton acceptor.

It belongs to the transferase hexapeptide repeat family. LpxD subfamily. In terms of assembly, homotrimer.

The enzyme catalyses a UDP-3-O-[(3R)-3-hydroxyacyl]-alpha-D-glucosamine + a (3R)-hydroxyacyl-[ACP] = a UDP-2-N,3-O-bis[(3R)-3-hydroxyacyl]-alpha-D-glucosamine + holo-[ACP] + H(+). It participates in bacterial outer membrane biogenesis; LPS lipid A biosynthesis. Its function is as follows. Catalyzes the N-acylation of UDP-3-O-acylglucosamine using 3-hydroxyacyl-ACP as the acyl donor. Is involved in the biosynthesis of lipid A, a phosphorylated glycolipid that anchors the lipopolysaccharide to the outer membrane of the cell. The chain is UDP-3-O-acylglucosamine N-acyltransferase from Paracoccus denitrificans (strain Pd 1222).